The following is a 201-amino-acid chain: UPF0301 protein BP0319 (201 aa).

Belongs to the UPF0301 (AlgH) family.

The chain is UPF0301 protein BP0319 from Bordetella pertussis (strain Tohama I / ATCC BAA-589 / NCTC 13251).